Reading from the N-terminus, the 436-residue chain is Citrate synthase (436 aa).

Residues His311 and Asp370 contribute to the active site.

Belongs to the citrate synthase family.

It carries out the reaction oxaloacetate + acetyl-CoA + H2O = citrate + CoA + H(+). Its pathway is carbohydrate metabolism; tricarboxylic acid cycle; isocitrate from oxaloacetate: step 1/2. The protein is Citrate synthase (gltA) of Rickettsia typhi (strain ATCC VR-144 / Wilmington).